A 306-amino-acid polypeptide reads, in one-letter code: Recombination-associated protein RdgC (306 aa).

The protein belongs to the RdgC family.

It is found in the cytoplasm. Its subcellular location is the nucleoid. May be involved in recombination. The sequence is that of Recombination-associated protein RdgC from Pseudomonas entomophila (strain L48).